Reading from the N-terminus, the 452-residue chain is Phosphoglucosamine mutase (452 aa).

The Phosphoserine intermediate role is filled by serine 112. Positions 112, 251, 253, and 255 each coordinate Mg(2+). Serine 112 is subject to Phosphoserine.

The protein belongs to the phosphohexose mutase family. Mg(2+) is required as a cofactor. In terms of processing, activated by phosphorylation.

The enzyme catalyses alpha-D-glucosamine 1-phosphate = D-glucosamine 6-phosphate. In terms of biological role, catalyzes the conversion of glucosamine-6-phosphate to glucosamine-1-phosphate. In Bordetella pertussis (strain Tohama I / ATCC BAA-589 / NCTC 13251), this protein is Phosphoglucosamine mutase.